A 96-amino-acid polypeptide reads, in one-letter code: Co-chaperonin GroES (96 aa).

The protein belongs to the GroES chaperonin family. As to quaternary structure, heptamer of 7 subunits arranged in a ring. Interacts with the chaperonin GroEL.

Its subcellular location is the cytoplasm. Functionally, together with the chaperonin GroEL, plays an essential role in assisting protein folding. The GroEL-GroES system forms a nano-cage that allows encapsulation of the non-native substrate proteins and provides a physical environment optimized to promote and accelerate protein folding. GroES binds to the apical surface of the GroEL ring, thereby capping the opening of the GroEL channel. In Shewanella pealeana (strain ATCC 700345 / ANG-SQ1), this protein is Co-chaperonin GroES.